A 1316-amino-acid polypeptide reads, in one-letter code: Serine/threonine-protein kinase 36 (1316 aa).

A Protein kinase domain is found at 4-254 (YHVLEMIGEG…WPDLLHHPFI (251 aa)). Residues 10-18 (IGEGSFGRV) and K33 each bind ATP. The active-site Proton acceptor is the D125. A disordered region spans residues 389 to 418 (QGFPEPRPEAMGRQSTDVVDPENEEPDSDD). Over residues 407 to 418 (VDPENEEPDSDD) the composition is skewed to acidic residues.

This sequence belongs to the protein kinase superfamily. Ser/Thr protein kinase family. Interacts with SPAG16 and KIF27. Mg(2+) serves as cofactor. As to expression, weakly expressed in the heart and thymus, present at moderate to high levels in the lungs, pancreas, and kidneys and at higher levels in the brain and cerebellum. Very highly expressed in the testis.

Its subcellular location is the cytoplasm. It is found in the nucleus. The protein resides in the cytoskeleton. The protein localises to the cilium axoneme. The catalysed reaction is L-seryl-[protein] + ATP = O-phospho-L-seryl-[protein] + ADP + H(+). The enzyme catalyses L-threonyl-[protein] + ATP = O-phospho-L-threonyl-[protein] + ADP + H(+). Functionally, serine/threonine protein kinase which plays an important role in the sonic hedgehog (Shh) pathway by regulating the activity of GLI transcription factors. Controls the activity of the transcriptional regulators GLI1, GLI2 and GLI3 by opposing the effect of SUFU and promoting their nuclear localization. GLI2 requires an additional function of STK36 to become transcriptionally active, but the enzyme does not need to possess an active kinase catalytic site for this to occur. Required for postnatal development, possibly by regulating the homeostasis of cerebral spinal fluid or ciliary function. Essential for construction of the central pair apparatus of motile cilia. The sequence is that of Serine/threonine-protein kinase 36 from Mus musculus (Mouse).